A 197-amino-acid chain; its full sequence is UPF0056 inner membrane protein YhgN (197 aa).

Residues 1–3 (MNE) are Periplasmic-facing. A helical membrane pass occupies residues 4 to 24 (IISAAVLLILIMDPLGNLPIF). Residues 25–44 (MSVLKHTEPKRRRAIMVREL) are Cytoplasmic-facing. The chain crosses the membrane as a helical span at residues 45–65 (LIALLVMLVFLFAGEKILAFL). Residues 66 to 71 (SLRAET) are Periplasmic-facing. Residues 72–92 (VSISGGIILFLIAIKMIFPSA) form a helical membrane-spanning segment. The Cytoplasmic portion of the chain corresponds to 93–105 (SGNSSGLPAGEEP). Residues 106–126 (FIVPLAIPLVAGPTILATLML) traverse the membrane as a helical segment. The Periplasmic portion of the chain corresponds to 127–138 (LSHQYPNQMGHL). The helical transmembrane segment at 139–159 (VIALLLAWGGTFVILLQSSLF) threads the bilayer. The Cytoplasmic segment spans residues 160 to 173 (LRLLGEKGVNALER). A helical transmembrane segment spans residues 174–194 (LMGLILVMMATQMFLDGIRMW). Residues 195-197 (MKG) are Periplasmic-facing.

Belongs to the UPF0056 (MarC) family.

The protein localises to the cell inner membrane. The protein is UPF0056 inner membrane protein YhgN (yhgN) of Escherichia coli O157:H7.